Here is a 2931-residue protein sequence, read N- to C-terminus: Probable polyketide synthase 9/36 (2931 aa).

In terms of domain architecture, Ketosynthase family 3 (KS3) spans 11–442 (EKGVAIVGIG…GSNCCLLISE (432 aa)). Catalysis depends on for beta-ketoacyl synthase activity residues C181, H323, and H362. Positions 635–668 (GVNPSFILGHSLGEISASYCSGMIDLDTFCYTVY) are acyl/malonyl transferase. S645 serves as the catalytic For acyl/malonyl transferase activity. Residues 925 to 1047 (IDHLGTSNSY…ANFQLLDHGN (123 aa)) form an N-terminal hotdog fold region. Residues 925–1209 (IDHLGTSNSY…CKSLIPIKDS (285 aa)) form the PKS/mFAS DH domain. The Proton acceptor; for dehydratase activity role is filled by H959. The tract at residues 1064-1209 (NLSKLTKNEL…CKSLIPIKDS (146 aa)) is C-terminal hotdog fold. The active-site Proton donor; for dehydratase activity is D1122. The chain crosses the membrane as a helical span at residues 2293–2313 (LINFVMASSAISLIGSTDLCT). Residues 2429–2506 (TGNKNIDELF…TSMKMILNSL (78 aa)) enclose the Carrier domain. S2466 bears the O-(pantetheine 4'-phosphoryl)serine mark. Residues 2553–2573 (KIILLTGTTGFLGGFLLFNMV) form a helical membrane-spanning segment.

Pantetheine 4'-phosphate is required as a cofactor.

Its subcellular location is the membrane. Probable polyketide synthase. The sequence is that of Probable polyketide synthase 9/36 (pks9) from Dictyostelium discoideum (Social amoeba).